A 444-amino-acid chain; its full sequence is Deoxyguanosinetriphosphate triphosphohydrolase-like protein (444 aa).

Residues 1–28 are disordered; sequence MTDAVWNERRLGEDKQRRNDHRSPYQRD. The 192-residue stretch at 59–250 folds into the HD domain; that stretch reads RLTHSLEVSQ…MELADDIAYA (192 aa).

It belongs to the dGTPase family. Type 2 subfamily.

The polypeptide is Deoxyguanosinetriphosphate triphosphohydrolase-like protein (Shewanella pealeana (strain ATCC 700345 / ANG-SQ1)).